Reading from the N-terminus, the 303-residue chain is Cathepsin B-like CP1 (303 aa).

The N-terminal stretch at 1-19 is a signal peptide; it reads MALSLLLAVVCAKPLVSRA. N41 carries N-linked (GlcNAc...) asparagine glycosylation. Disulfide bonds link C92–C119, C102–C145, and C138–C181. C105 is an active-site residue. Active-site residues include H249 and N270.

This sequence belongs to the peptidase C1 family.

The protein localises to the vacuole. In terms of biological role, thiol protease which is required for parasite excystation and invasion of the proximal small intestine of the human host. This Giardia intestinalis (Giardia lamblia) protein is Cathepsin B-like CP1 (CP1).